A 65-amino-acid chain; its full sequence is Ovary maturating parsin (65 aa).

A compositionally biased stretch (low complexity) spans 17–28 (PAAPAVAPAAPA). The interval 17-36 (PAAPAVAPAAPASWPHQQRR) is disordered.

In terms of assembly, monomer.

Neurohormone that anticipates ovarian maturation. Acts as a true gonadotropin and stimulates vitellogenin biosynthesis. The protein is Ovary maturating parsin of Locusta migratoria (Migratory locust).